The sequence spans 438 residues: 23S rRNA (uracil(1939)-C(5))-methyltransferase RlmD (438 aa).

A TRAM domain is found at 10–69 (KASVNTKHLSVDVVRLDHNSAGIAFVDKKPVFIEGALPEEQAIIQFIEQKKQYSRAKLIK). Residues cysteine 82, cysteine 88, cysteine 91, and cysteine 169 each coordinate [4Fe-4S] cluster. S-adenosyl-L-methionine is bound by residues glutamine 272, phenylalanine 301, asparagine 306, glutamate 322, asparagine 349, and aspartate 370. Cysteine 396 (nucleophile) is an active-site residue.

Belongs to the class I-like SAM-binding methyltransferase superfamily. RNA M5U methyltransferase family. RlmD subfamily.

The catalysed reaction is uridine(1939) in 23S rRNA + S-adenosyl-L-methionine = 5-methyluridine(1939) in 23S rRNA + S-adenosyl-L-homocysteine + H(+). In terms of biological role, catalyzes the formation of 5-methyl-uridine at position 1939 (m5U1939) in 23S rRNA. This chain is 23S rRNA (uracil(1939)-C(5))-methyltransferase RlmD, found in Aliivibrio salmonicida (strain LFI1238) (Vibrio salmonicida (strain LFI1238)).